Reading from the N-terminus, the 367-residue chain is Prenyltransferase idtC (367 aa).

The first 22 residues, 1-22 (MTTLAWFAGRSMVLDLAALTSA), serve as a signal peptide directing secretion. Residues 32 to 42 (TSTPTSTPTST) are compositionally biased toward low complexity. Residues 32-84 (TSTPTSTPTSTDKAGTPPGSTIHHYGYPQGSVTKPNNSKTEKENGSPKDSKGN) are disordered. Residue N67 is glycosylated (N-linked (GlcNAc...) asparagine). Residues 70–82 (KTEKENGSPKDSK) are compositionally biased toward basic and acidic residues. H132 contributes to the substrate binding site. Positions 139 and 143 each coordinate Mg(2+). Residue R148 coordinates substrate. The N-linked (GlcNAc...) asparagine glycan is linked to N150. The substrate site is built by K233, T234, Q264, N271, and K281.

It belongs to the FPP/GGPP synthase family. It depends on Mg(2+) as a cofactor.

Its pathway is secondary metabolite biosynthesis. Functionally, prenyltransferase; part of the gene cluster that mediates the biosynthesis of paspalitrems, indole-diterpene (IDT) mycotoxins that are potent tremorgens in mammals. The geranylgeranyl diphosphate (GGPP) synthase idtG is proposed to catalyze the first step in IDT biosynthesis via catalysis of a series of iterative condensations of isopentenyl diphosphate (IPP) with dimethylallyl diphosphate (DMAPP), geranyl diphosphate (GPP), and farnesyl diphosphate (FPP), to form GGPP. Condensation of indole-3-glycerol phosphate with GGPP by the prenyltransferase idtC then forms 3-geranylgeranylindole (3-GGI). Epoxidation of the two terminal alkenes of the geranylgeranyl moiety by the FAD-dependent monooxygenase idtM, and cyclization by the terpene cyclase idtB then leads to the production of paspaline. The cytochrome P450 monooxygenase idtP then catalyzes oxidative elimination of the pendant methyl group at C-12 of paspaline and generates the C-10 ketone to yield 13-desoxypaxilline. The cytochrome P450 monooxygenase idtQ may catalyze the C-13 oxidation of 13-desoxypaxilline to afford paxilline. Considering that both paspalicine and paxilline were detected in C.paspali, idtQ also catalyzes the formation of paspalinine from 13-desoxypaxilline via paspalicine as an intermediate. Finally, the alpha-prenyltransferase idtF prenylates paspalinine at the C-20 or the C-21 positions to yield paspalitrems A and C, respectively. The hydroxylation of paspalitrem A at C-32 by a still unknown oxidase affords paspalitrem B. This chain is Prenyltransferase idtC, found in Claviceps paspali (Rye ergot fungus).